A 1007-amino-acid chain; its full sequence is Integrator complex subunit 8 (1007 aa).

A WFEF motif motif is present at residues 19 to 24 (WFEFLL). Residues 56–78 (TAQESVGTPGSDLQNLNQTPSNS) show a composition bias toward polar residues. The tract at residues 56–112 (TAQESVGTPGSDLQNLNQTPSNSGPIPGVVGGAPAPTTPTASGGVGMPHSPQRPAEK) is disordered. Over residues 79-97 (GPIPGVVGGAPAPTTPTAS) the composition is skewed to low complexity.

Belongs to the Integrator subunit 8 family. In terms of assembly, belongs to the multiprotein complex Integrator, at least composed of IntS1, IntS2, IntS3, IntS4, omd/IntS5, IntS6, defl/IntS7, IntS8, IntS9, IntS10, IntS11, IntS12, asun/IntS13, IntS14 and IntS15. The core complex associates with protein phosphatase 2A subunits mts/PP2A and Pp2A-29B, to form the Integrator-PP2A (INTAC) complex.

It localises to the nucleus. The protein localises to the chromosome. In terms of biological role, component of the integrator complex, a multiprotein complex that terminates RNA polymerase II (Pol II) transcription in the promoter-proximal region of genes. The integrator complex provides a quality checkpoint during transcription elongation by driving premature transcription termination of transcripts that are unfavorably configured for transcriptional elongation: the complex terminates transcription by (1) catalyzing dephosphorylation of the C-terminal domain (CTD) of Pol II subunit Polr2A/Rbp1 and Spt5, and (2) degrading the exiting nascent RNA transcript via endonuclease activity. The integrator complex is also involved in the 3'-end processing of the U7 snRNA, and also the spliceosomal snRNAs U1, U2, U4 and U5. Within the integrator complex, INTS8 is required for the recruitment of protein phosphatase 2A (PP2A) to transcription pause-release checkpoint. This Drosophila melanogaster (Fruit fly) protein is Integrator complex subunit 8.